Reading from the N-terminus, the 320-residue chain is Methionyl-tRNA formyltransferase (320 aa).

Residue 114-117 (SLLP) participates in (6S)-5,6,7,8-tetrahydrofolate binding.

This sequence belongs to the Fmt family.

It catalyses the reaction L-methionyl-tRNA(fMet) + (6R)-10-formyltetrahydrofolate = N-formyl-L-methionyl-tRNA(fMet) + (6S)-5,6,7,8-tetrahydrofolate + H(+). Attaches a formyl group to the free amino group of methionyl-tRNA(fMet). The formyl group appears to play a dual role in the initiator identity of N-formylmethionyl-tRNA by promoting its recognition by IF2 and preventing the misappropriation of this tRNA by the elongation apparatus. The chain is Methionyl-tRNA formyltransferase from Acinetobacter baumannii (strain AB0057).